The following is a 628-amino-acid chain: Protein SDS23 (628 aa).

The interval 1 to 126 (MVNPPQPRQM…NKSSSQSIAP (126 aa)) is disordered. Polar residues predominate over residues 15–24 (RLSTSTSSGP). Composition is skewed to low complexity over residues 40–71 (QLQH…PGST) and 109–123 (SRHA…SSQS). CBS domains lie at 258-319 (LHPK…RFPS) and 334-392 (GSSN…SHLL). The segment at 551 to 609 (GRRTDPQAARNQRRRSSTSTTRSSIDSALSAEGILPSGSAIIGSSNAANTGRRGSVEVS) is disordered. Over residues 587–599 (SGSAIIGSSNAAN) the composition is skewed to low complexity.

It belongs to the SDS23 family.

The protein resides in the cytoplasm. The protein localises to the nucleus. In terms of biological role, involved in DNA replication and cell separation. This chain is Protein SDS23 (SDS24), found in Candida albicans (strain SC5314 / ATCC MYA-2876) (Yeast).